Reading from the N-terminus, the 153-residue chain is Interleukin-2 (153 aa).

The N-terminal stretch at 1 to 20 (MYKVQLLSCIALTLALLTSS) is a signal peptide. O-linked (GalNAc...) threonine glycosylation occurs at Thr-23. A disulfide bridge connects residues Cys-78 and Cys-125. Asn-111 carries an N-linked (GlcNAc...) asparagine glycan.

This sequence belongs to the IL-2 family.

The protein localises to the secreted. Its function is as follows. Cytokine produced by activated CD4-positive helper T-cells and to a lesser extend activated CD8-positive T-cells and natural killer (NK) cells that plays pivotal roles in the immune response and tolerance. Binds to a receptor complex composed of either the high-affinity trimeric IL-2R (IL2RA/CD25, IL2RB/CD122 and IL2RG/CD132) or the low-affinity dimeric IL-2R (IL2RB and IL2RG). Interaction with the receptor leads to oligomerization and conformation changes in the IL-2R subunits resulting in downstream signaling starting with phosphorylation of JAK1 and JAK3. In turn, JAK1 and JAK3 phosphorylate the receptor to form a docking site leading to the phosphorylation of several substrates including STAT5. This process leads to activation of several pathways including STAT, phosphoinositide-3-kinase/PI3K and mitogen-activated protein kinase/MAPK pathways. Functions as a T-cell growth factor and can increase NK-cell cytolytic activity as well. Promotes strong proliferation of activated B-cells and subsequently immunoglobulin production. Plays a pivotal role in regulating the adaptive immune system by controlling the survival and proliferation of regulatory T-cells, which are required for the maintenance of immune tolerance. Moreover, participates in the differentiation and homeostasis of effector T-cell subsets, including Th1, Th2, Th17 as well as memory CD8-positive T-cells. The sequence is that of Interleukin-2 (IL2) from Oryctolagus cuniculus (Rabbit).